Here is a 365-residue protein sequence, read N- to C-terminus: Flagellar P-ring protein (365 aa).

A signal peptide spans 1–22 (MSVRRFLVWILALTVGAAPVMA).

Belongs to the FlgI family. As to quaternary structure, the basal body constitutes a major portion of the flagellar organelle and consists of four rings (L,P,S, and M) mounted on a central rod.

Its subcellular location is the periplasm. It localises to the bacterial flagellum basal body. Functionally, assembles around the rod to form the L-ring and probably protects the motor/basal body from shearing forces during rotation. This chain is Flagellar P-ring protein, found in Marinobacter nauticus (strain ATCC 700491 / DSM 11845 / VT8) (Marinobacter aquaeolei).